A 158-amino-acid polypeptide reads, in one-letter code: MNILGIDPGSRNLGYAIVELNNSHMKLIEAGLVKIKPSEFQYQLSQMIEGLDMVFSSHSVDEVAMEDIFYAYNPQTVLKLAQFRGALALRIIQLHGNFSAYTPLQVKKALTGKAKASKEQVAFMVKKILGIKKEVKPLDITDAMAVAITHAQRLRLKR.

Catalysis depends on residues Asp7, Glu66, and Asp139. Mg(2+) is bound by residues Asp7, Glu66, and Asp139.

This sequence belongs to the RuvC family. In terms of assembly, homodimer which binds Holliday junction (HJ) DNA. The HJ becomes 2-fold symmetrical on binding to RuvC with unstacked arms; it has a different conformation from HJ DNA in complex with RuvA. In the full resolvosome a probable DNA-RuvA(4)-RuvB(12)-RuvC(2) complex forms which resolves the HJ. The cofactor is Mg(2+).

It is found in the cytoplasm. The catalysed reaction is Endonucleolytic cleavage at a junction such as a reciprocal single-stranded crossover between two homologous DNA duplexes (Holliday junction).. Functionally, the RuvA-RuvB-RuvC complex processes Holliday junction (HJ) DNA during genetic recombination and DNA repair. Endonuclease that resolves HJ intermediates. Cleaves cruciform DNA by making single-stranded nicks across the HJ at symmetrical positions within the homologous arms, yielding a 5'-phosphate and a 3'-hydroxyl group; requires a central core of homology in the junction. The consensus cleavage sequence is 5'-(A/T)TT(C/G)-3'. Cleavage occurs on the 3'-side of the TT dinucleotide at the point of strand exchange. HJ branch migration catalyzed by RuvA-RuvB allows RuvC to scan DNA until it finds its consensus sequence, where it cleaves and resolves the cruciform DNA. The sequence is that of Crossover junction endodeoxyribonuclease RuvC from Nitratiruptor sp. (strain SB155-2).